We begin with the raw amino-acid sequence, 93 residues long: Small ribosomal subunit protein bS20c (93 aa).

The protein belongs to the bacterial ribosomal protein bS20 family.

Its subcellular location is the plastid. The protein localises to the chloroplast. Functionally, binds directly to 16S ribosomal RNA. This Trieres chinensis (Marine centric diatom) protein is Small ribosomal subunit protein bS20c.